The primary structure comprises 167 residues: MAVADDIALIRKQEEVLVFPAFDEAVAFKIGSAIRARAIAENLPIIVDIRLWDRPLFYAAMPGSNASNPDWARRKINVVRRFLRSTYRMVLEQQRPDRAFKIGEGLDVSDYVLAGGGFPVTVKGAGVIGVIAVSGLPEREDHGVVIDALCDHLGIDKRGLVLASEAE.

Belongs to the UPF0303 family.

The protein is UPF0303 protein mlr5144 of Mesorhizobium japonicum (strain LMG 29417 / CECT 9101 / MAFF 303099) (Mesorhizobium loti (strain MAFF 303099)).